Reading from the N-terminus, the 273-residue chain is Dermonecrotic toxin SdSicTox-betaIF1 (273 aa).

The active site involves histidine 5. Glutamate 25 and aspartate 27 together coordinate Mg(2+). The active-site Nucleophile is histidine 41. 2 disulfide bridges follow: cysteine 45-cysteine 51 and cysteine 47-cysteine 189.

The protein belongs to the arthropod phospholipase D family. Class II subfamily. It depends on Mg(2+) as a cofactor. Expressed by the venom gland.

It localises to the secreted. It catalyses the reaction an N-(acyl)-sphingosylphosphocholine = an N-(acyl)-sphingosyl-1,3-cyclic phosphate + choline. The catalysed reaction is an N-(acyl)-sphingosylphosphoethanolamine = an N-(acyl)-sphingosyl-1,3-cyclic phosphate + ethanolamine. It carries out the reaction a 1-acyl-sn-glycero-3-phosphocholine = a 1-acyl-sn-glycero-2,3-cyclic phosphate + choline. The enzyme catalyses a 1-acyl-sn-glycero-3-phosphoethanolamine = a 1-acyl-sn-glycero-2,3-cyclic phosphate + ethanolamine. Its function is as follows. Dermonecrotic toxins cleave the phosphodiester linkage between the phosphate and headgroup of certain phospholipids (sphingolipid and lysolipid substrates), forming an alcohol (often choline) and a cyclic phosphate. This toxin acts on sphingomyelin (SM). It may also act on ceramide phosphoethanolamine (CPE), lysophosphatidylcholine (LPC) and lysophosphatidylethanolamine (LPE), but not on lysophosphatidylserine (LPS), and lysophosphatidylglycerol (LPG). It acts by transphosphatidylation, releasing exclusively cyclic phosphate products as second products. Induces dermonecrosis, hemolysis, increased vascular permeability, edema, inflammatory response, and platelet aggregation. The protein is Dermonecrotic toxin SdSicTox-betaIF1 of Sicarius cf. damarensis (strain GJB-2008) (Six-eyed sand spider).